Consider the following 171-residue polypeptide: Co-chaperone protein HscB homolog (171 aa).

A J domain is found at 2–74 (NHFELFGLPS…ISRAEYILAE (73 aa)).

Belongs to the HscB family. Interacts with HscA and stimulates its ATPase activity.

In terms of biological role, co-chaperone involved in the maturation of iron-sulfur cluster-containing proteins. Seems to help targeting proteins to be folded toward HscA. The polypeptide is Co-chaperone protein HscB homolog (Vibrio parahaemolyticus serotype O3:K6 (strain RIMD 2210633)).